The primary structure comprises 239 residues: Phosphoribosylaminoimidazole-succinocarboxamide synthase (239 aa).

It belongs to the SAICAR synthetase family.

The catalysed reaction is 5-amino-1-(5-phospho-D-ribosyl)imidazole-4-carboxylate + L-aspartate + ATP = (2S)-2-[5-amino-1-(5-phospho-beta-D-ribosyl)imidazole-4-carboxamido]succinate + ADP + phosphate + 2 H(+). The protein operates within purine metabolism; IMP biosynthesis via de novo pathway; 5-amino-1-(5-phospho-D-ribosyl)imidazole-4-carboxamide from 5-amino-1-(5-phospho-D-ribosyl)imidazole-4-carboxylate: step 1/2. The chain is Phosphoribosylaminoimidazole-succinocarboxamide synthase from Bacillus cereus (strain AH187).